The following is a 156-amino-acid chain: S-ribosylhomocysteine lyase (156 aa).

Residues His-56, His-60, and Cys-123 each coordinate Fe cation.

This sequence belongs to the LuxS family. In terms of assembly, homodimer. Requires Fe cation as cofactor.

It catalyses the reaction S-(5-deoxy-D-ribos-5-yl)-L-homocysteine = (S)-4,5-dihydroxypentane-2,3-dione + L-homocysteine. In terms of biological role, involved in the synthesis of autoinducer 2 (AI-2) which is secreted by bacteria and is used to communicate both the cell density and the metabolic potential of the environment. The regulation of gene expression in response to changes in cell density is called quorum sensing. Catalyzes the transformation of S-ribosylhomocysteine (RHC) to homocysteine (HC) and 4,5-dihydroxy-2,3-pentadione (DPD). This Staphylococcus aureus (strain bovine RF122 / ET3-1) protein is S-ribosylhomocysteine lyase.